The chain runs to 429 residues: MIDINLIRDPKTREKVVESEKKRFRDGLAVGKAYELDRKRIEMNFRLDQINTRINQLNREIKSGYRQGKNKEDGDLSEKVAEIKGLSDEAKGLRDDVKAVEDELNKVMKGIGNIISPSVVVSNDEKDNPIVRSYRSSRNMQKNPRPFCVLMKDFTHSVAGAKVMGHRGYYLSGKMARLAQALTRYAIDFLENKGYTYIQTPVMLRRDVMRKTSQLSDFDDQLYKVEDDLYLIATSEQSLAALYMDERMVPQEVPKKFCGQSLCFRKEAGAHGKDNAGLFRVHQFEKIEQFVICGPEESQKYHEEMIKACEEFYQSLDISYNVVGIVSGELNDAAAIKYDLEAYFPSAEKYRELVSCSNCTDYQSRELEIRYGVVKENNRKIYVHLLNGTMCAVQRALCCIVENYQTGDGIAIPDVLQGYFGGDLIELGP.

Threonine 234–glutamate 236 lines the L-serine pocket. Residues arginine 265 to glutamate 267 and valine 281 each bind ATP. Glutamate 288 lines the L-serine pocket. Glutamate 352 to serine 355 is a binding site for ATP. Threonine 389 is an L-serine binding site.

The protein belongs to the class-II aminoacyl-tRNA synthetase family. Type-1 seryl-tRNA synthetase subfamily. In terms of assembly, homodimer. The tRNA molecule probably binds across the dimer.

The catalysed reaction is tRNA(Ser) + L-serine + ATP = L-seryl-tRNA(Ser) + AMP + diphosphate + H(+). It carries out the reaction tRNA(Sec) + L-serine + ATP = L-seryl-tRNA(Sec) + AMP + diphosphate + H(+). It participates in aminoacyl-tRNA biosynthesis; selenocysteinyl-tRNA(Sec) biosynthesis; L-seryl-tRNA(Sec) from L-serine and tRNA(Sec): step 1/1. In terms of biological role, catalyzes the attachment of serine to tRNA(Ser). Is also probably able to aminoacylate tRNA(Sec) with serine, to form the misacylated tRNA L-seryl-tRNA(Sec), which will be further converted into selenocysteinyl-tRNA(Sec). In Encephalitozoon cuniculi (strain GB-M1) (Microsporidian parasite), this protein is Serine--tRNA ligase.